The chain runs to 560 residues: Light-independent protochlorophyllide reductase subunit N (560 aa).

[4Fe-4S] cluster contacts are provided by Cys24, Cys49, and Cys109. A compositionally biased stretch (low complexity) spans 173-182 (NSLFNQSSNS). A disordered region spans residues 173 to 210 (NSLFNQSSNSPENLKTLNTKKDTFQNSTENSKTFSAEK). Residues 196-206 (FQNSTENSKTF) are compositionally biased toward polar residues.

It belongs to the BchN/ChlN family. Protochlorophyllide reductase is composed of three subunits; ChlL, ChlN and ChlB. Forms a heterotetramer of two ChlB and two ChlN subunits. [4Fe-4S] cluster is required as a cofactor.

The protein localises to the plastid. It is found in the chloroplast. The enzyme catalyses chlorophyllide a + oxidized 2[4Fe-4S]-[ferredoxin] + 2 ADP + 2 phosphate = protochlorophyllide a + reduced 2[4Fe-4S]-[ferredoxin] + 2 ATP + 2 H2O. The protein operates within porphyrin-containing compound metabolism; chlorophyll biosynthesis (light-independent). Functionally, component of the dark-operative protochlorophyllide reductase (DPOR) that uses Mg-ATP and reduced ferredoxin to reduce ring D of protochlorophyllide (Pchlide) to form chlorophyllide a (Chlide). This reaction is light-independent. The NB-protein (ChlN-ChlB) is the catalytic component of the complex. The polypeptide is Light-independent protochlorophyllide reductase subunit N (Tetradesmus obliquus (Green alga)).